Here is a 452-residue protein sequence, read N- to C-terminus: 3-phosphoshikimate 1-carboxyvinyltransferase (452 aa).

Low complexity predominate over residues 1 to 17 (MSHAAAAKPATARKSQA). The tract at residues 1–26 (MSHAAAAKPATARKSQALSGTARVPG) is disordered. Residues lysine 28, serine 29, and arginine 33 each contribute to the 3-phosphoshikimate site. Residue lysine 28 participates in phosphoenolpyruvate binding. Residues glycine 100 and arginine 128 each contribute to the phosphoenolpyruvate site. Residues serine 174, glutamine 176, aspartate 327, and lysine 354 each contribute to the 3-phosphoshikimate site. Glutamine 176 provides a ligand contact to phosphoenolpyruvate. Aspartate 327 acts as the Proton acceptor in catalysis. Positions 358 and 409 each coordinate phosphoenolpyruvate.

The protein belongs to the EPSP synthase family. As to quaternary structure, monomer.

The protein resides in the cytoplasm. It catalyses the reaction 3-phosphoshikimate + phosphoenolpyruvate = 5-O-(1-carboxyvinyl)-3-phosphoshikimate + phosphate. Its pathway is metabolic intermediate biosynthesis; chorismate biosynthesis; chorismate from D-erythrose 4-phosphate and phosphoenolpyruvate: step 6/7. Functionally, catalyzes the transfer of the enolpyruvyl moiety of phosphoenolpyruvate (PEP) to the 5-hydroxyl of shikimate-3-phosphate (S3P) to produce enolpyruvyl shikimate-3-phosphate and inorganic phosphate. This is 3-phosphoshikimate 1-carboxyvinyltransferase from Mesorhizobium japonicum (strain LMG 29417 / CECT 9101 / MAFF 303099) (Mesorhizobium loti (strain MAFF 303099)).